Here is a 570-residue protein sequence, read N- to C-terminus: Dihydroxy-acid dehydratase 2 (570 aa).

Cys-51 contacts [2Fe-2S] cluster. Asp-83 contributes to the Mg(2+) binding site. Cys-124 lines the [2Fe-2S] cluster pocket. Residues Asp-125 and Lys-126 each contribute to the Mg(2+) site. An N6-carboxylysine modification is found at Lys-126. Residue Cys-196 participates in [2Fe-2S] cluster binding. A Mg(2+)-binding site is contributed by Glu-446. The active-site Proton acceptor is Ser-472.

The protein belongs to the IlvD/Edd family. Homodimer. [2Fe-2S] cluster serves as cofactor. Requires Mg(2+) as cofactor.

The catalysed reaction is (2R)-2,3-dihydroxy-3-methylbutanoate = 3-methyl-2-oxobutanoate + H2O. The enzyme catalyses (2R,3R)-2,3-dihydroxy-3-methylpentanoate = (S)-3-methyl-2-oxopentanoate + H2O. The protein operates within amino-acid biosynthesis; L-isoleucine biosynthesis; L-isoleucine from 2-oxobutanoate: step 3/4. Its pathway is amino-acid biosynthesis; L-valine biosynthesis; L-valine from pyruvate: step 3/4. Its function is as follows. Functions in the biosynthesis of branched-chain amino acids. Catalyzes the dehydration of (2R,3R)-2,3-dihydroxy-3-methylpentanoate (2,3-dihydroxy-3-methylvalerate) into 2-oxo-3-methylpentanoate (2-oxo-3-methylvalerate) and of (2R)-2,3-dihydroxy-3-methylbutanoate (2,3-dihydroxyisovalerate) into 2-oxo-3-methylbutanoate (2-oxoisovalerate), the penultimate precursor to L-isoleucine and L-valine, respectively. The chain is Dihydroxy-acid dehydratase 2 from Bordetella bronchiseptica (strain ATCC BAA-588 / NCTC 13252 / RB50) (Alcaligenes bronchisepticus).